A 303-amino-acid chain; its full sequence is tRNA dimethylallyltransferase (303 aa).

16 to 23 (GPTASGKS) contacts ATP. 18–23 (TASGKS) is a substrate binding site. An interaction with substrate tRNA region spans residues 41-44 (DSMQ). The disordered stretch occupies residues 141–161 (AEALHGELSARDPETAGRVRP). The interval 165–169 (QRIVR) is interaction with substrate tRNA.

It belongs to the IPP transferase family. As to quaternary structure, monomer. Requires Mg(2+) as cofactor.

The enzyme catalyses adenosine(37) in tRNA + dimethylallyl diphosphate = N(6)-dimethylallyladenosine(37) in tRNA + diphosphate. Catalyzes the transfer of a dimethylallyl group onto the adenine at position 37 in tRNAs that read codons beginning with uridine, leading to the formation of N6-(dimethylallyl)adenosine (i(6)A). The polypeptide is tRNA dimethylallyltransferase (Rhizobium meliloti (strain 1021) (Ensifer meliloti)).